The sequence spans 380 residues: MSTSNLFTPLQFGKCLLQHKLVLSPMTRFRADNEGVPLPYVKTYYCQRASLPGTLLLTEATAISRRARGFPNVPGIWSQEQIAGWKEVVDAVHAKGSYIWLQLWATGRAAEVGVLKANGFDLVSSSAVPVSPGEPTPRALSDDEINSYIGDFVQAAKNAVLEAGFDGVELHGANGFLIDQFLQSPCNQRTDQWGGCIENRSRFGLEITRRVIDAVGKDHVGMKLSTWSTFQGMGTMDDLIPQFEHFIMRLREIGIAYLHLANSRWVEEEDPTIRTHPDIHNETFVRMWGKEKPVLLAGGYGPESAKLVVDETYSDHKNIGVVFGRHYISNPDLPFRLKMGLPLQKYNRETFYIPFSDEGYLDYPYSEEYITENKKQAVLA.

FMN-binding positions include Pro-25–Thr-27, Ala-60, Gln-102, and His-171. Residues His-171 and Asn-174 each contribute to the substrate site. FMN-binding positions include Lys-223, Gly-299, Gly-324–Arg-325, and Arg-325. Tyr-352 contacts substrate.

It belongs to the NADH:flavin oxidoreductase/NADH oxidase family.

Its function is as follows. Probable inactive dehydrogenase; part of the gene cluster that mediates the biosynthesis of fungal ergot alkaloid ergovaline, the predominant ergopeptine product in E.festucae var. lolii. DmaW catalyzes the first step of ergot alkaloid biosynthesis by condensing dimethylallyl diphosphate (DMAP) and tryptophan to form 4-dimethylallyl-L-tryptophan. The second step is catalyzed by the methyltransferase easF that methylates 4-dimethylallyl-L-tryptophan in the presence of S-adenosyl-L-methionine, resulting in the formation of 4-dimethylallyl-L-abrine. The catalase easC and the FAD-dependent oxidoreductase easE then transform 4-dimethylallyl-L-abrine to chanoclavine-I which is further oxidized by easD in the presence of NAD(+), resulting in the formation of chanoclavine-I aldehyde. Agroclavine dehydrogenase easG then mediates the conversion of chanoclavine-I aldehyde to agroclavine via a non-enzymatic adduct reaction: the substrate is an iminium intermediate that is formed spontaneously from chanoclavine-I aldehyde in the presence of glutathione. The presence of easA is not required to complete this reaction. Further conversion of agroclavine to paspalic acid is a two-step process involving oxidation of agroclavine to elymoclavine and of elymoclavine to paspalic acid, the second step being performed by the elymoclavine oxidase cloA. Paspalic acid is then further converted to D-lysergic acid. Ergovaline is assembled from D-lysergic acid and three different amino acids by the D-lysergyl-peptide-synthetase composed of a monomudular (lpsB) and a trimodular (lpsA) nonribosomal peptide synthetase subunit. In Epichloe festucae var. lolii (Neotyphodium lolii), this protein is Probable inactive reductase easA.